The chain runs to 314 residues: tRNA dimethylallyltransferase (314 aa).

Residue 12 to 19 (GPTASGKT) participates in ATP binding. Substrate is bound at residue 14–19 (TASGKT). 3 interaction with substrate tRNA regions span residues 37–40 (DSAL), 161–165 (QRIQR), and 244–249 (RCVGYR).

This sequence belongs to the IPP transferase family. Monomer. The cofactor is Mg(2+).

The catalysed reaction is adenosine(37) in tRNA + dimethylallyl diphosphate = N(6)-dimethylallyladenosine(37) in tRNA + diphosphate. In terms of biological role, catalyzes the transfer of a dimethylallyl group onto the adenine at position 37 in tRNAs that read codons beginning with uridine, leading to the formation of N6-(dimethylallyl)adenosine (i(6)A). This is tRNA dimethylallyltransferase from Janthinobacterium sp. (strain Marseille) (Minibacterium massiliensis).